The following is a 245-amino-acid chain: tRNA (guanine-N(1)-)-methyltransferase (245 aa).

S-adenosyl-L-methionine-binding positions include Gly111 and 130–135; that span reads IGDYVL.

This sequence belongs to the RNA methyltransferase TrmD family. In terms of assembly, homodimer.

It is found in the cytoplasm. The enzyme catalyses guanosine(37) in tRNA + S-adenosyl-L-methionine = N(1)-methylguanosine(37) in tRNA + S-adenosyl-L-homocysteine + H(+). Specifically methylates guanosine-37 in various tRNAs. This chain is tRNA (guanine-N(1)-)-methyltransferase, found in Dictyoglomus turgidum (strain DSM 6724 / Z-1310).